A 323-amino-acid polypeptide reads, in one-letter code: Aldo-keto reductase family 1 member C3 (323 aa).

NADP(+)-binding positions include 20–24 (GFGTY) and D50. Y55 acts as the Proton donor in catalysis. Residue H117 coordinates substrate. NADP(+)-binding positions include 166 to 167 (SN), Q190, 216 to 221 (YSALGS), and 270 to 280 (KSYNEQRIREN).

The protein belongs to the aldo/keto reductase family.

It is found in the cytoplasm. It catalyses the reaction a 3alpha-hydroxysteroid + NADP(+) = a 3-oxosteroid + NADPH + H(+). The catalysed reaction is a 3alpha-hydroxysteroid + NAD(+) = a 3-oxosteroid + NADH + H(+). The enzyme catalyses prostaglandin F2alpha + NADP(+) = prostaglandin D2 + NADPH + H(+). It carries out the reaction testosterone + NAD(+) = androst-4-ene-3,17-dione + NADH + H(+). It catalyses the reaction testosterone + NADP(+) = androst-4-ene-3,17-dione + NADPH + H(+). The catalysed reaction is prostaglandin F2alpha + NADP(+) = prostaglandin H2 + NADPH + H(+). The enzyme catalyses prostaglandin D2 + NADPH + H(+) = 11beta-prostaglandin F2 + NADP(+). It carries out the reaction prostaglandin D2-ethanolamide + NADPH + H(+) = 11beta-prostaglandin F2-ethanolamide + NADP(+). It catalyses the reaction 17beta-estradiol + NADP(+) = estrone + NADPH + H(+). The catalysed reaction is 17beta-estradiol + NAD(+) = estrone + NADH + H(+). The enzyme catalyses (20S)-hydroxypregn-4-en-3-one + NADP(+) = progesterone + NADPH + H(+). It carries out the reaction (20S)-hydroxypregn-4-en-3-one + NAD(+) = progesterone + NADH + H(+). It catalyses the reaction 5alpha-androstane-3alpha,17beta-diol + NADP(+) = 17beta-hydroxy-5alpha-androstan-3-one + NADPH + H(+). The catalysed reaction is 5alpha-androstane-3alpha,17beta-diol + NAD(+) = 17beta-hydroxy-5alpha-androstan-3-one + NADH + H(+). The enzyme catalyses androsterone + NADPH + H(+) = 5alpha-androstane-3alpha,17beta-diol + NADP(+). It carries out the reaction 5alpha-androstane-3alpha,17beta-diol + NAD(+) = androsterone + NADH + H(+). It catalyses the reaction 5alpha-androstane-3beta,17beta-diol + NADP(+) = 17beta-hydroxy-5alpha-androstan-3-one + NADPH + H(+). The catalysed reaction is 9-cis-retinol + NADP(+) = 9-cis-retinal + NADPH + H(+). It functions in the pathway steroid metabolism. Functionally, cytosolic aldo-keto reductase that catalyzes the NADH and NADPH-dependent reduction of ketosteroids to hydroxysteroids. Acts as a NAD(P)(H)-dependent 3-, 17- and 20-ketosteroid reductase on the steroid nucleus and side chain and regulates the metabolism of androgens, estrogens and progesterone. Displays the ability to catalyze both oxidation and reduction in vitro, but most probably acts as a reductase in vivo since the oxidase activity measured in vitro is inhibited by physiological concentration of NADPH. Acts preferentially as a 17-ketosteroid reductase and has the highest catalytic efficiency of the AKR1C enzyme for the reduction of delta4-androstenedione to form testosterone. Reduces prostaglandin (PG) D2 to 11beta-prostaglandin F2, progesterone to 20alpha-hydroxyprogesterone and estrone to 17beta-estradiol. Catalyzes the transformation of the potent androgen dihydrotestosterone (DHT) into the less active form, 5-alpha-androstan-3-alpha,17-beta-diol (3-alpha-diol). Also displays retinaldehyde reductase activity toward 9-cis-retinal. This is Aldo-keto reductase family 1 member C3 (AKR1C3) from Pongo abelii (Sumatran orangutan).